A 734-amino-acid polypeptide reads, in one-letter code: Photosystem I P700 chlorophyll a apoprotein A2 (734 aa).

Transmembrane regions (helical) follow at residues 46–69 (IFASHFGQLAIIFLWTSGNLFHVA), 135–158 (LYNGSMFLLFIATLALFAGWLHLE), 175–199 (LNHHLSALFGLSSLAWSGHLIHVAI), 273–291 (IAHHHLAIAVLFIVAGHMY), 330–353 (LHFQLGLALASLGVITSLVAQHMY), 369–395 (AALYTHHQYIAGFIMTGAFAHGAIFFI), 417–439 (AIISHLSWVTLFLGFHTLGLYVH), and 517–535 (FLVHHAIALGLHTTTLILV). Residues Cys-559 and Cys-568 each contribute to the [4Fe-4S] cluster site. 2 helical membrane-spanning segments follow: residues 575 to 596 (AFYLAVFWMLNTIGWTTFYWHW) and 643 to 665 (LAVWGWMFLFGHLVWATGFMFLI). Chlorophyll a-binding residues include His-654, Met-662, and Tyr-670. Trp-671 lines the phylloquinone pocket. A helical transmembrane segment spans residues 707–727 (LVGLAHFSVGYVFTYAAFLIA).

This sequence belongs to the PsaA/PsaB family. As to quaternary structure, the PsaA/B heterodimer binds the P700 chlorophyll special pair and subsequent electron acceptors. PSI consists of a core antenna complex that captures photons, and an electron transfer chain that converts photonic excitation into a charge separation. The eukaryotic PSI reaction center is composed of at least 11 subunits. It depends on P700 is a chlorophyll a/chlorophyll a' dimer, A0 is one or more chlorophyll a, A1 is one or both phylloquinones and FX is a shared 4Fe-4S iron-sulfur center. as a cofactor.

The protein localises to the plastid. It localises to the chloroplast thylakoid membrane. It catalyses the reaction reduced [plastocyanin] + hnu + oxidized [2Fe-2S]-[ferredoxin] = oxidized [plastocyanin] + reduced [2Fe-2S]-[ferredoxin]. Functionally, psaA and PsaB bind P700, the primary electron donor of photosystem I (PSI), as well as the electron acceptors A0, A1 and FX. PSI is a plastocyanin/cytochrome c6-ferredoxin oxidoreductase, converting photonic excitation into a charge separation, which transfers an electron from the donor P700 chlorophyll pair to the spectroscopically characterized acceptors A0, A1, FX, FA and FB in turn. Oxidized P700 is reduced on the lumenal side of the thylakoid membrane by plastocyanin or cytochrome c6. This chain is Photosystem I P700 chlorophyll a apoprotein A2, found in Euglena gracilis.